A 70-amino-acid polypeptide reads, in one-letter code: Small ribosomal subunit protein bS18c (70 aa).

Belongs to the bacterial ribosomal protein bS18 family. In terms of assembly, part of the 30S ribosomal subunit.

It is found in the plastid. Its subcellular location is the chloroplast. This Pyropia yezoensis (Susabi-nori) protein is Small ribosomal subunit protein bS18c.